The primary structure comprises 179 residues: Replication restart protein DnaT (179 aa).

The segment at glycine 156 to glycine 179 is disordered.

This sequence belongs to the DnaT family. In terms of assembly, homooligomerizes. Interacts with PriB. Component of the replication restart primosome. Primosome assembly occurs via a 'hand-off' mechanism. PriA binds to replication forks, subsequently PriB then DnaT bind; DnaT then displaces ssDNA to generate the helicase loading substrate.

Functionally, involved in the restart of stalled replication forks, which reloads the replicative helicase on sites other than the origin of replication. Can function in multiple replication restart pathways. Displaces ssDNA from a PriB-ssDNA complex. Probably forms a spiral filament on ssDNA. The protein is Replication restart protein DnaT of Escherichia coli O157:H7.